Here is a 78-residue protein sequence, read N- to C-terminus: Large ribosomal subunit protein bL28 (78 aa).

Residues 1 to 31 (MAAHCQVTGAEPGFGHSISHSHRRNKRRFDP) form a disordered region.

This sequence belongs to the bacterial ribosomal protein bL28 family.

The polypeptide is Large ribosomal subunit protein bL28 (Arthrobacter sp. (strain FB24)).